Consider the following 485-residue polypeptide: MKTMLAAPTASSNGRPIGPHKSWKKVNEERKALKRQRKQDKLLKELQQAKEAESQAGKAANEVQAKDKPNPSTLSIAVPGSILENAQSNELRAYVAGQIARAACIFRVNEVIVFDDVGIATARETKRSYEADGEGSSTGTVRSSSLQLARILQYLECPQYLRKYFFPLHKDLKYSGLLNPLDTPHHLRQQSKFRYREGVICDKKAKEGHSYANVGLLNDVLVDKAIEPGVRVTVKMEPQSESCRKQRGTLVSPDEPRRETGVYWGYQVRIAHSMSEIFTKSPYATGYDVTVGTSDRGTNVHEVPNRSYNFNHMLIVFGGLQGLESALANDEKLTVDDPELLFDHYVNVLPRQGSRTIRTEEALLIALAALQEKLQPQVADVEIDLTDLLPKSEDSGIAVRRDVLVSKKQKKRKQVEDTPDETVVDEPSFSKPLPKVARLTANPFADSSEELAKNTPAQDDFEVVSSTTVSGTSHSCADDDLSRFD.

3 residues coordinate S-adenosyl-L-methionine: Arg296, Gly318, and Asn347.

It belongs to the class IV-like SAM-binding methyltransferase superfamily.

The protein localises to the nucleus. The enzyme catalyses uridine in 28S rRNA + S-adenosyl-L-methionine = N(3)-methyluridine in 28S rRNA + S-adenosyl-L-homocysteine + H(+). Functionally, S-adenosyl-L-methionine-dependent methyltransferase that specifically methylates the uridine in position 3485 of 28S rRNA. The polypeptide is 28S rRNA (uridine-N(3))-methyltransferase (Drosophila melanogaster (Fruit fly)).